A 195-amino-acid polypeptide reads, in one-letter code: Neurturin (195 aa).

A signal peptide spans 1–19; sequence MRRWKAAALVSLICSSLLS. Positions 20–95 are excised as a propeptide; the sequence is VWMCQEGLLL…RAGPRRRRAR (76 aa). Cystine bridges form between C101–C163, C128–C192, and C132–C194. R147, R156, and R158 together coordinate heparan sulfate group.

This sequence belongs to the TGF-beta family. GDNF subfamily. Homodimer; disulfide-linked. Interacts with GFRA2 coreceptor and RET: forms a 2:2:2 ternary complex composed of NRTN ligand, GFRA2 and RET receptor. Also forms a 4:4:4 tetrameric complex composed of 4 copies of NRTN ligand, GFRA2 and RET receptor, which prevents endocytosis of RET. In terms of tissue distribution, widespread distribution.

It is found in the secreted. Its function is as follows. Growth factor that supports the survival of sympathetic neurons in culture. May regulate the development and maintenance of the CNS. Involved in the development of the neural crest. Might control the size of non-neuronal cell population such as haemopoietic cells. Acts by binding to its coreceptor, GFRA2, leading to autophosphorylation and activation of the RET receptor. Heparan sulfate-binding is required for signaling. The chain is Neurturin (Nrtn) from Mus musculus (Mouse).